A 429-amino-acid polypeptide reads, in one-letter code: Apolipoprotein A-IV (429 aa).

The N-terminal stretch at Met-1–Ala-20 is a signal peptide. Repeat copies occupy residues Asp-33–Leu-54, Ala-60–Val-81, Pro-82–Arg-103, Pro-115–Glu-136, Pro-137–Thr-158, Pro-159–Arg-180, Pro-181–Thr-202, Pro-203–Ala-224, Pro-225–Lys-246, Lys-247–Ala-268, Pro-269–Gln-286, Lys-287–Glu-308, and Pro-309–Gly-330. The segment at Asp-33 to Gly-330 is 13 X 22 AA approximate tandem repeats. The segment at Lys-359 to Ser-429 is disordered. Residues Gln-381 to Gln-420 are compositionally biased toward low complexity.

The protein belongs to the apolipoprotein A1/A4/E family. In terms of assembly, homodimer. Phosphorylation sites are present in the extracellular medium. As to expression, secreted in plasma.

It localises to the secreted. May have a role in chylomicrons and VLDL secretion and catabolism. Required for efficient activation of lipoprotein lipase by ApoC-II; potent activator of LCAT. Apoa-IV is a major component of HDL and chylomicrons. The sequence is that of Apolipoprotein A-IV (APOA4) from Macaca fascicularis (Crab-eating macaque).